The primary structure comprises 196 residues: UPF0200 protein MK0400 (196 aa).

7 to 14 is a binding site for ATP; that stretch reads GMPGAGKG.

The protein belongs to the UPF0200 family.

This Methanopyrus kandleri (strain AV19 / DSM 6324 / JCM 9639 / NBRC 100938) protein is UPF0200 protein MK0400.